The following is a 553-amino-acid chain: Putative transport protein YidE (553 aa).

The next 5 helical transmembrane spans lie at 4 to 24, 28 to 48, 65 to 85, 95 to 115, and 158 to 178; these read IALTVSILALVAVVGLFIGNV, GIGLGIGGVLFGGIIVGHFVS, FGLILFVYTIGIQVGPGFFAS, LFAVLIVIIGGLVTAILHKLF, and MSYAMAYPFGICGILFTMWML. 2 RCK C-terminal domains span residues 191-276 and 279-361; these read QQHE…VIGQ and DTSL…VLGN. Helical transmembrane passes span 371–391, 393–413, 439–459, 464–484, 493–513, and 533–553; these read MLPVFIGIGLGVLLGSIPVFV, GFPAALKLGLAGGPLIMALIL, IVLFLSVVGLKSGGDFVNTLV, LSWIGYGALITAVPLITVGIL, YLTMCGMLAGSMTDPPALAFA, and LVMFLRIITPQLLAVLFWSIG.

The protein belongs to the AAE transporter (TC 2.A.81) family. YidE subfamily.

It localises to the cell membrane. This Escherichia coli (strain ATCC 8739 / DSM 1576 / NBRC 3972 / NCIMB 8545 / WDCM 00012 / Crooks) protein is Putative transport protein YidE.